The chain runs to 367 residues: Glutamate 5-kinase (367 aa).

An ATP-binding site is contributed by K10. Residues S50, D137, and N149 each coordinate substrate. Residues 169–170 (TD) and 211–217 (TGGMATK) each bind ATP. Residues 275–353 (AGEITVDDGA…QQISEILGYE (79 aa)) enclose the PUA domain.

The protein belongs to the glutamate 5-kinase family.

The protein resides in the cytoplasm. The catalysed reaction is L-glutamate + ATP = L-glutamyl 5-phosphate + ADP. Its pathway is amino-acid biosynthesis; L-proline biosynthesis; L-glutamate 5-semialdehyde from L-glutamate: step 1/2. In terms of biological role, catalyzes the transfer of a phosphate group to glutamate to form L-glutamate 5-phosphate. The sequence is that of Glutamate 5-kinase from Yersinia pseudotuberculosis serotype IB (strain PB1/+).